Here is a 399-residue protein sequence, read N- to C-terminus: Succinate--CoA ligase [ADP-forming] subunit beta (399 aa).

Positions 9–254 (KELLAKYGIG…ETEEDPAEVE (246 aa)) constitute an ATP-grasp domain. ATP contacts are provided by residues lysine 46, 53 to 55 (GRG), valine 112, and glutamate 117. 2 residues coordinate Mg(2+): asparagine 209 and aspartate 223. Residues asparagine 274 and 331–333 (GIM) contribute to the substrate site.

The protein belongs to the succinate/malate CoA ligase beta subunit family. As to quaternary structure, heterotetramer of two alpha and two beta subunits. Mg(2+) is required as a cofactor.

The catalysed reaction is succinate + ATP + CoA = succinyl-CoA + ADP + phosphate. It catalyses the reaction GTP + succinate + CoA = succinyl-CoA + GDP + phosphate. The protein operates within carbohydrate metabolism; tricarboxylic acid cycle; succinate from succinyl-CoA (ligase route): step 1/1. In terms of biological role, succinyl-CoA synthetase functions in the citric acid cycle (TCA), coupling the hydrolysis of succinyl-CoA to the synthesis of either ATP or GTP and thus represents the only step of substrate-level phosphorylation in the TCA. The beta subunit provides nucleotide specificity of the enzyme and binds the substrate succinate, while the binding sites for coenzyme A and phosphate are found in the alpha subunit. This chain is Succinate--CoA ligase [ADP-forming] subunit beta, found in Erythrobacter litoralis (strain HTCC2594).